Here is a 105-residue protein sequence, read N- to C-terminus: U-scoloptoxin(10)-Sm3a (105 aa).

The N-terminal stretch at 1–23 (MYKFIFIFFTVFFLINIIEESXT) is a signal peptide.

Belongs to the scoloptoxin-10 family. In terms of processing, contains 3 disulfide bonds. Expressed by the venom gland.

It localises to the secreted. This is U-scoloptoxin(10)-Sm3a from Scolopendra morsitans (Tanzanian blue ringleg centipede).